Here is a 167-residue protein sequence, read N- to C-terminus: MAKLEAQQKDDLQEKLIAVNRVSKVVKGGRIFSFTALTVVGDGNGKVGYGYGKAREVPAAIQKAMEKARRNMVTVELNAGTLHHPVKGRHTGSRVYMQPASQGTGIIAGGAMRAVLEVAGVHNVLSKAYGSTNPINIVRATVDALVHMKSPSQIAAKRGLNVDEIRG.

The S5 DRBM domain maps to 12 to 75; that stretch reads LQEKLIAVNR…EKARRNMVTV (64 aa).

Belongs to the universal ribosomal protein uS5 family. As to quaternary structure, part of the 30S ribosomal subunit. Contacts proteins S4 and S8.

With S4 and S12 plays an important role in translational accuracy. Functionally, located at the back of the 30S subunit body where it stabilizes the conformation of the head with respect to the body. This chain is Small ribosomal subunit protein uS5, found in Shewanella oneidensis (strain ATCC 700550 / JCM 31522 / CIP 106686 / LMG 19005 / NCIMB 14063 / MR-1).